Here is a 223-residue protein sequence, read N- to C-terminus: Flagellar L-ring protein 2 (223 aa).

An N-terminal signal peptide occupies residues 1–17 (MKWLSKSWAVAVVLLVG). Cys-18 carries N-palmitoyl cysteine lipidation. Cys-18 carries the S-diacylglycerol cysteine lipid modification.

This sequence belongs to the FlgH family. As to quaternary structure, the basal body constitutes a major portion of the flagellar organelle and consists of four rings (L,P,S, and M) mounted on a central rod.

Its subcellular location is the cell outer membrane. The protein localises to the bacterial flagellum basal body. Its function is as follows. Assembles around the rod to form the L-ring and probably protects the motor/basal body from shearing forces during rotation. The chain is Flagellar L-ring protein 2 from Vibrio parahaemolyticus serotype O3:K6 (strain RIMD 2210633).